We begin with the raw amino-acid sequence, 306 residues long: Porphobilinogen deaminase (306 aa).

Cys240 bears the S-(dipyrrolylmethanemethyl)cysteine mark.

It belongs to the HMBS family. In terms of assembly, monomer. It depends on dipyrromethane as a cofactor.

The catalysed reaction is 4 porphobilinogen + H2O = hydroxymethylbilane + 4 NH4(+). It functions in the pathway porphyrin-containing compound metabolism; protoporphyrin-IX biosynthesis; coproporphyrinogen-III from 5-aminolevulinate: step 2/4. In terms of biological role, tetrapolymerization of the monopyrrole PBG into the hydroxymethylbilane pre-uroporphyrinogen in several discrete steps. This chain is Porphobilinogen deaminase, found in Thiobacillus denitrificans (strain ATCC 25259 / T1).